A 377-amino-acid polypeptide reads, in one-letter code: Succinyl-diaminopimelate desuccinylase (377 aa).

Histidine 67 is a binding site for Zn(2+). Aspartate 69 is a catalytic residue. Aspartate 100 lines the Zn(2+) pocket. Glutamate 134 (proton acceptor) is an active-site residue. The Zn(2+) site is built by glutamate 135, glutamate 163, and histidine 349.

Homodimer. Zn(2+) serves as cofactor.

It carries out the reaction N-succinyl-(2S,6S)-2,6-diaminopimelate + H2O = (2S,6S)-2,6-diaminopimelate + succinate. It participates in amino-acid biosynthesis; L-lysine biosynthesis via DAP pathway; LL-2,6-diaminopimelate from (S)-tetrahydrodipicolinate (succinylase route): step 3/3. Competitively inhibited by L,L-DAP, D,L-DAP, 2-carboxyethylphosphonic acid (CEPA) and 5-mercaptopentanoic acid (MSPA). Succinate is a poor inhibitor. Its function is as follows. Catalyzes the hydrolysis of N-succinyl-L,L-diaminopimelic acid (SDAP), forming succinate and LL-2,6-diaminopimelate (DAP), an intermediate involved in the bacterial biosynthesis of lysine and meso-diaminopimelic acid, an essential component of bacterial cell walls. It can only hydrolyze L,L-N-succinyl-diaminopimelic acid (L,L-SDAP) and is inactive toward D,L-, L,D-, and D,D-SDAP. The protein is Succinyl-diaminopimelate desuccinylase (dapE) of Haemophilus influenzae (strain ATCC 51907 / DSM 11121 / KW20 / Rd).